Reading from the N-terminus, the 459-residue chain is Protein maelstrom (459 aa).

Positions 2-69 form a DNA-binding region, HMG box; that stretch reads APKKHSGFMM…AQRAKRESSN (68 aa). Residues 43 to 78 are disordered; it reads NTQQRGPYNSGGKDANVAQRAKRESSNGHGQVDKAQ. Positions 63 to 78 are enriched in basic and acidic residues; the sequence is AKRESSNGHGQVDKAQ.

The protein belongs to the maelstrom family. In terms of tissue distribution, in germaria and egg chambers, it is detected in the germline. In the germarium, it is in all regions, including region I where the germ cells are dividing. In early egg chambers, it is uniformly distributed throughout the nurse cells and oocyte but, by stage 5, it is most concentrated around the outer margins of the cells, closest to the periphery of the egg chamber. Level decreases in stages 5 and 6, but most noticeably in the oocyte, where protein level remains. No detectable protein from stage 8 onward (at protein level).

Its subcellular location is the cytoplasm. It localises to the nucleus. The protein localises to the perinuclear region. It is found in the cytoplasmic ribonucleoprotein granule. In terms of biological role, involved both in the piRNA and miRNA metabolic processes. As a component of the meiotic nuage, plays a central role during oogenesis by repressing transposable elements and preventing their mobilization, which is essential for the germline integrity. Repression of transposable elements is mediated via the piRNA metabolic process, which mediates the repression of transposable elements during meiosis by forming complexes composed of piRNAs and Piwi proteins and governs the repression of transposons. As a nuclear component, it is required for proper differentiation in the germline stem cell (GSC) lineage by repressing microRNA-7 (miR-7), thereby acting as an indirect regulator of bag-of-marbles (Bam). Acts by binding to the promoter of miR-7 gene and repressing its expression; miR-7 repression alleviates the Bam repression by miR-7, thereby allowing differentiation in the germline stem cell (GSC) lineage. Indirectly required to position the microtubule organizing center in stage 2-6 oocytes. Involved in repression of long interspersed nuclear elements (LINEs) including HeT-A, I-element, TART and possibly mst40 LINEs; may have a role in production of piwi-interacting RNA (piRNA). The protein is Protein maelstrom of Drosophila melanogaster (Fruit fly).